The chain runs to 122 residues: Large ribosomal subunit protein uL14 (122 aa).

Belongs to the universal ribosomal protein uL14 family. In terms of assembly, part of the 50S ribosomal subunit. Forms a cluster with proteins L3 and L19. In the 70S ribosome, L14 and L19 interact and together make contacts with the 16S rRNA in bridges B5 and B8.

Binds to 23S rRNA. Forms part of two intersubunit bridges in the 70S ribosome. This chain is Large ribosomal subunit protein uL14, found in Shewanella loihica (strain ATCC BAA-1088 / PV-4).